The primary structure comprises 369 residues: Epoxyqueuosine reductase (369 aa).

The active-site Proton donor is the Asp135. Residues 177–209 (IPLPVDEPSENQCGKCTACITSCPTNAIVAEGV) form the 4Fe-4S ferredoxin-type domain. [4Fe-4S] cluster contacts are provided by Cys189, Cys192, Cys195, Cys199, Cys215, Cys242, Cys245, and Cys249.

The protein belongs to the QueG family. Monomer. Cob(II)alamin serves as cofactor. The cofactor is [4Fe-4S] cluster.

It localises to the cytoplasm. It catalyses the reaction epoxyqueuosine(34) in tRNA + AH2 = queuosine(34) in tRNA + A + H2O. The protein operates within tRNA modification; tRNA-queuosine biosynthesis. Functionally, catalyzes the conversion of epoxyqueuosine (oQ) to queuosine (Q), which is a hypermodified base found in the wobble positions of tRNA(Asp), tRNA(Asn), tRNA(His) and tRNA(Tyr). This is Epoxyqueuosine reductase from Vibrio cholerae serotype O1 (strain ATCC 39315 / El Tor Inaba N16961).